A 166-amino-acid chain; its full sequence is Probable calcium-binding protein CML17 (166 aa).

EF-hand domains follow at residues 12–47 (EQIN…LGVK), 48–83 (PSPD…ELLS), 91–126 (YTEE…LGHA), and 127–162 (LTVA…AAFD). Residues aspartate 25, asparagine 27, aspartate 29, serine 31, and glutamate 36 each coordinate Ca(2+). 9 residues coordinate Ca(2+): aspartate 104, aspartate 106, asparagine 108, glutamate 115, aspartate 140, aspartate 142, aspartate 144, arginine 146, and glutamate 151.

In terms of biological role, potential calcium sensor. This Arabidopsis thaliana (Mouse-ear cress) protein is Probable calcium-binding protein CML17 (CML17).